The sequence spans 71 residues: Sec-independent protein translocase protein TatA (71 aa).

A helical membrane pass occupies residues 1 to 21 (MGSFSLLHWLVVLVIVLLVFG). The interval 43 to 71 (LREDDKPTDQLGSTSQSTASGPQQDHGKH) is disordered. Polar residues predominate over residues 52 to 65 (QLGSTSQSTASGPQ).

It belongs to the TatA/E family. As to quaternary structure, the Tat system comprises two distinct complexes: a TatABC complex, containing multiple copies of TatA, TatB and TatC subunits, and a separate TatA complex, containing only TatA subunits. Substrates initially bind to the TatABC complex, which probably triggers association of the separate TatA complex to form the active translocon.

It localises to the cell inner membrane. Functionally, part of the twin-arginine translocation (Tat) system that transports large folded proteins containing a characteristic twin-arginine motif in their signal peptide across membranes. TatA could form the protein-conducting channel of the Tat system. The sequence is that of Sec-independent protein translocase protein TatA from Xylella fastidiosa (strain 9a5c).